We begin with the raw amino-acid sequence, 243 residues long: 1-(5-phosphoribosyl)-5-[(5-phosphoribosylamino)methylideneamino] imidazole-4-carboxamide isomerase (243 aa).

The active-site Proton acceptor is D8. D130 (proton donor) is an active-site residue.

It belongs to the HisA/HisF family.

It is found in the cytoplasm. The enzyme catalyses 1-(5-phospho-beta-D-ribosyl)-5-[(5-phospho-beta-D-ribosylamino)methylideneamino]imidazole-4-carboxamide = 5-[(5-phospho-1-deoxy-D-ribulos-1-ylimino)methylamino]-1-(5-phospho-beta-D-ribosyl)imidazole-4-carboxamide. It participates in amino-acid biosynthesis; L-histidine biosynthesis; L-histidine from 5-phospho-alpha-D-ribose 1-diphosphate: step 4/9. This Acinetobacter baylyi (strain ATCC 33305 / BD413 / ADP1) protein is 1-(5-phosphoribosyl)-5-[(5-phosphoribosylamino)methylideneamino] imidazole-4-carboxamide isomerase.